A 189-amino-acid polypeptide reads, in one-letter code: ATP-dependent protease subunit HslV (189 aa).

The active site involves T12. Na(+) contacts are provided by S172, C175, and T178.

The protein belongs to the peptidase T1B family. HslV subfamily. As to quaternary structure, a double ring-shaped homohexamer of HslV is capped on each side by a ring-shaped HslU homohexamer. The assembly of the HslU/HslV complex is dependent on binding of ATP.

The protein localises to the cytoplasm. The catalysed reaction is ATP-dependent cleavage of peptide bonds with broad specificity.. Allosterically activated by HslU binding. In terms of biological role, protease subunit of a proteasome-like degradation complex believed to be a general protein degrading machinery. In Ehrlichia canis (strain Jake), this protein is ATP-dependent protease subunit HslV.